The following is a 619-amino-acid chain: DNA mismatch repair protein MutL (619 aa).

Residues 364–375 are compositionally biased toward low complexity; it reads EPASAREPAAPR. Residues 364–399 form a disordered region; sequence EPASAREPAAPRYSTSSGATGGRQPAASWPHAQPGY.

It belongs to the DNA mismatch repair MutL/HexB family.

Its function is as follows. This protein is involved in the repair of mismatches in DNA. It is required for dam-dependent methyl-directed DNA mismatch repair. May act as a 'molecular matchmaker', a protein that promotes the formation of a stable complex between two or more DNA-binding proteins in an ATP-dependent manner without itself being part of a final effector complex. In Citrobacter koseri (strain ATCC BAA-895 / CDC 4225-83 / SGSC4696), this protein is DNA mismatch repair protein MutL.